Consider the following 299-residue polypeptide: RGG repeats nuclear RNA binding protein A (299 aa).

Gly residues predominate over residues 1-21 (RGGGRGGPRGGGRGRGPGRGR). Disordered stretches follow at residues 1–173 (RGGG…KEMT) and 232–299 (EAVE…LVAK). The span at 45 to 60 (RVQEDGESGKLSERRG) shows a compositional bias: basic and acidic residues. Gly residues predominate over residues 61-78 (GYGGPRGGFHGGRRGGFN). Basic and acidic residues-rich tracts occupy residues 86 to 98 (EGER…DRRS) and 134 to 146 (DGEK…KEAG). The short motif at 88-98 (ERPRRVFDRRS) is the Arginine-rich RNA-binding motif E-R-P-R-R-X-[F/Y]-[E/D]-R-R-S element. A compositionally biased stretch (gly residues) spans 267 to 278 (RGRGGFGGGVGG).

The protein belongs to the SERBP1-HABP4 family. Expressed in seedlings but not in roots.

The protein localises to the nucleus. It localises to the cytoplasm. The protein resides in the perinuclear region. Its function is as follows. Ribosome-binding protein that acts as a regulator of mRNA translation by promoting ribosome inactivation. Binds RNA. The protein is RGG repeats nuclear RNA binding protein A of Nicotiana tabacum (Common tobacco).